We begin with the raw amino-acid sequence, 88 residues long: Protein WIR1A (88 aa).

The Cytoplasmic segment spans residues 1 to 13 (MASLGSSAGGRRP). A helical transmembrane segment spans residues 14-35 (TVLLQIALFVVVAAIIINSSVC). Topologically, residues 36-88 (LGATAVHDAAASGTGALDPNVPAVPTPGGAGQPYTGRGCRTVYGCRPPAGGQP) are extracellular.

The protein localises to the membrane. Its function is as follows. Associated with pathogen defense. The sequence is that of Protein WIR1A (WIR1A) from Triticum aestivum (Wheat).